Here is a 516-residue protein sequence, read N- to C-terminus: Probable cytochrome P450 9f2 (516 aa).

Position 460 (C460) interacts with heme.

This sequence belongs to the cytochrome P450 family. It depends on heme as a cofactor.

The protein localises to the endoplasmic reticulum membrane. It localises to the microsome membrane. In terms of biological role, may be involved in the metabolism of insect hormones and in the breakdown of synthetic insecticides. This is Probable cytochrome P450 9f2 (Cyp9f2) from Drosophila melanogaster (Fruit fly).